The following is a 361-amino-acid chain: Phospho-N-acetylmuramoyl-pentapeptide-transferase (361 aa).

Helical transmembrane passes span 25-45 (RAVL…PAVI), 73-93 (TMGG…WADL), 97-117 (YVWL…VDDW), 134-154 (YFWQ…TASL), 168-188 (ATFG…IVGA), 200-220 (GLAI…AYVA), 237-257 (AGEL…FLWF), 264-284 (VFMG…VAVV), 289-309 (IILF…MIQV), and 338-358 (QVVV…LSSL).

Belongs to the glycosyltransferase 4 family. MraY subfamily. It depends on Mg(2+) as a cofactor.

The protein localises to the cell inner membrane. It carries out the reaction UDP-N-acetyl-alpha-D-muramoyl-L-alanyl-gamma-D-glutamyl-meso-2,6-diaminopimeloyl-D-alanyl-D-alanine + di-trans,octa-cis-undecaprenyl phosphate = di-trans,octa-cis-undecaprenyl diphospho-N-acetyl-alpha-D-muramoyl-L-alanyl-D-glutamyl-meso-2,6-diaminopimeloyl-D-alanyl-D-alanine + UMP. It functions in the pathway cell wall biogenesis; peptidoglycan biosynthesis. Its function is as follows. Catalyzes the initial step of the lipid cycle reactions in the biosynthesis of the cell wall peptidoglycan: transfers peptidoglycan precursor phospho-MurNAc-pentapeptide from UDP-MurNAc-pentapeptide onto the lipid carrier undecaprenyl phosphate, yielding undecaprenyl-pyrophosphoryl-MurNAc-pentapeptide, known as lipid I. This Thiobacillus denitrificans (strain ATCC 25259 / T1) protein is Phospho-N-acetylmuramoyl-pentapeptide-transferase.